Reading from the N-terminus, the 225-residue chain is Pathogenesis-related thaumatin-like protein 3.8 (225 aa).

The first 26 residues, 1–26 (MAKVSDLALLLVAGMAISLYIQETGA), serve as a signal peptide directing secretion. 8 cysteine pairs are disulfide-bonded: C35–C224, C76–C86, C91–C97, C139–C213, C144–C197, C152–C162, C166–C175, and C176–C184. A glycan (N-linked (GlcNAc...) asparagine) is linked at N188.

The protein belongs to the thaumatin family.

May be involved in disease resistance. This chain is Pathogenesis-related thaumatin-like protein 3.8, found in Cryptomeria japonica (Japanese cedar).